A 710-amino-acid chain; its full sequence is DNA ligase (710 aa).

NAD(+) is bound by residues 53–57 (DAEYD), 102–103 (SL), and glutamate 136. The active-site N6-AMP-lysine intermediate is the lysine 138. Arginine 159, glutamate 196, lysine 312, and lysine 336 together coordinate NAD(+). Cysteine 429, cysteine 432, cysteine 453, and cysteine 459 together coordinate Zn(2+). Residues 633–710 (ETSSPVAGKT…DEDQWIELAG (78 aa)) form the BRCT domain.

The protein belongs to the NAD-dependent DNA ligase family. LigA subfamily. Mg(2+) serves as cofactor. The cofactor is Mn(2+).

The catalysed reaction is NAD(+) + (deoxyribonucleotide)n-3'-hydroxyl + 5'-phospho-(deoxyribonucleotide)m = (deoxyribonucleotide)n+m + AMP + beta-nicotinamide D-nucleotide.. In terms of biological role, DNA ligase that catalyzes the formation of phosphodiester linkages between 5'-phosphoryl and 3'-hydroxyl groups in double-stranded DNA using NAD as a coenzyme and as the energy source for the reaction. It is essential for DNA replication and repair of damaged DNA. In Parvibaculum lavamentivorans (strain DS-1 / DSM 13023 / NCIMB 13966), this protein is DNA ligase.